Here is a 390-residue protein sequence, read N- to C-terminus: MTKIYFIAGETSGDFIGGRIIQHLKDNIEIKCMGVGGKYMEEAGSFKSLFSITSINLMGFVEILPHIFKLKKLIDKTVEDITNSRADLLITIDSPGFTYRVAKRVRKLLPKLKMIHIVAPSVWAYKEDRAVKYAQIYDCLFALLPFEPPYFTRLGLDCRYIGHPIMEQEFYSDKVALRKEFKIDENERVLCVTLGSRKGEILRHLPVFVSSIEEIFKSCNNLKVIFTLANPAHEAIIKPFLEDVKFNYLFSSERLKTYAVADAALAKSGTNTLEIAASGTPMIVAYKVNLISFFIIRLLIKIKYVTLINIIAGSEIIPEFIQFNCRASLISNKLQELLFNSKKAYEQVIESQKILQKLGFESNRSPSYIAAEIIKQEFLKPKIKLLKEKD.

Belongs to the LpxB family.

It catalyses the reaction a lipid X + a UDP-2-N,3-O-bis[(3R)-3-hydroxyacyl]-alpha-D-glucosamine = a lipid A disaccharide + UDP + H(+). Its pathway is bacterial outer membrane biogenesis; LPS lipid A biosynthesis. Condensation of UDP-2,3-diacylglucosamine and 2,3-diacylglucosamine-1-phosphate to form lipid A disaccharide, a precursor of lipid A, a phosphorylated glycolipid that anchors the lipopolysaccharide to the outer membrane of the cell. This chain is Lipid-A-disaccharide synthase, found in Rickettsia felis (strain ATCC VR-1525 / URRWXCal2) (Rickettsia azadi).